Consider the following 473-residue polypeptide: Lysophospholipid acyltransferase 5 (473 aa).

4 helical membrane passes run 20–40 (LLIS…FFYN), 43–63 (AQHQ…FNCG), 66–86 (VIHP…MAGT), and 88–108 (ASIY…YWFH). Residues Asn315 and His351 contribute to the active site. A run of 3 helical transmembrane segments spans residues 341–361 (VITL…FLLF), 396–416 (FIWI…FLMF), and 431–451 (LYFI…MVLL). A Di-lysine motif motif is present at residues 470-473 (KKEL).

Belongs to the membrane-bound acyltransferase family.

The protein localises to the endoplasmic reticulum membrane. The enzyme catalyses a 1-acyl-sn-glycero-3-phosphocholine + an acyl-CoA = a 1,2-diacyl-sn-glycero-3-phosphocholine + CoA. It catalyses the reaction a 1-acyl-sn-glycero-3-phospho-L-serine + an acyl-CoA = a 1,2-diacyl-sn-glycero-3-phospho-L-serine + CoA. The catalysed reaction is a 1-acyl-sn-glycero-3-phosphoethanolamine + an acyl-CoA = a 1,2-diacyl-sn-glycero-3-phosphoethanolamine + CoA. Its pathway is lipid metabolism; phospholipid metabolism. Functionally, probable acyltransferase which may mediate the conversion of lysophosphatidylcholine (1-acyl-sn-glycero-3-phosphocholine or LPC) into phosphatidylcholine (1,2-diacyl-sn-glycero-3-phosphocholine or PC) (LPCAT activity). May also catalyze the conversion of lysophosphatidylethanolamine (1-acyl-2-hydroxy-sn-glycero-3-phosphoethanolamine or LPE) into phosphatidylethanolamine (1,2-diacyl-sn-glycero-3-phosphoethanolamine or PE) (LPEAT activity), as well as the conversion of lysophosphatidylserine (1-acyl-2-hydroxy-sn-glycero-3-phospho-L-serine or LPS) into phosphatidylserine (1,2-diacyl-sn-glycero-3-phospho-L-serine or PS) (LPSAT activity). Required for incorporation of arachidonic acid into PC, PE, and PS. This Caenorhabditis elegans protein is Lysophospholipid acyltransferase 5 (mboa-6).